The chain runs to 122 residues: Large ribosomal subunit protein uL14 (122 aa).

It belongs to the universal ribosomal protein uL14 family. As to quaternary structure, part of the 50S ribosomal subunit. Forms a cluster with proteins L3 and L19. In the 70S ribosome, L14 and L19 interact and together make contacts with the 16S rRNA in bridges B5 and B8.

In terms of biological role, binds to 23S rRNA. Forms part of two intersubunit bridges in the 70S ribosome. This is Large ribosomal subunit protein uL14 from Shewanella amazonensis (strain ATCC BAA-1098 / SB2B).